The primary structure comprises 256 residues: Enolase-phosphatase E1 (256 aa).

Mg(2+) contacts are provided by D14 and E16. Substrate is bound by residues 142–143 and K176; that span reads SS. D201 is a Mg(2+) binding site.

It belongs to the HAD-like hydrolase superfamily. MasA/MtnC family. Monomer. Requires Mg(2+) as cofactor.

Its subcellular location is the cytoplasm. It is found in the nucleus. It carries out the reaction 5-methylsulfanyl-2,3-dioxopentyl phosphate + H2O = 1,2-dihydroxy-5-(methylsulfanyl)pent-1-en-3-one + phosphate. Its pathway is amino-acid biosynthesis; L-methionine biosynthesis via salvage pathway; L-methionine from S-methyl-5-thio-alpha-D-ribose 1-phosphate: step 3/6. The protein operates within amino-acid biosynthesis; L-methionine biosynthesis via salvage pathway; L-methionine from S-methyl-5-thio-alpha-D-ribose 1-phosphate: step 4/6. Bifunctional enzyme that catalyzes the enolization of 2,3-diketo-5-methylthiopentyl-1-phosphate (DK-MTP-1-P) into the intermediate 2-hydroxy-3-keto-5-methylthiopentenyl-1-phosphate (HK-MTPenyl-1-P), which is then dephosphorylated to form the acireductone 1,2-dihydroxy-3-keto-5-methylthiopentene (DHK-MTPene). The protein is Enolase-phosphatase E1 of Drosophila melanogaster (Fruit fly).